We begin with the raw amino-acid sequence, 289 residues long: ATP synthase gamma chain (289 aa).

This sequence belongs to the ATPase gamma chain family. As to quaternary structure, F-type ATPases have 2 components, CF(1) - the catalytic core - and CF(0) - the membrane proton channel. CF(1) has five subunits: alpha(3), beta(3), gamma(1), delta(1), epsilon(1). CF(0) has three main subunits: a, b and c.

The protein resides in the cell membrane. In terms of biological role, produces ATP from ADP in the presence of a proton gradient across the membrane. The gamma chain is believed to be important in regulating ATPase activity and the flow of protons through the CF(0) complex. The protein is ATP synthase gamma chain of Lawsonia intracellularis (strain PHE/MN1-00).